A 504-amino-acid chain; its full sequence is ATP synthase subunit alpha (504 aa).

172–179 (GDRQTGKT) lines the ATP pocket.

The protein belongs to the ATPase alpha/beta chains family. As to quaternary structure, F-type ATPases have 2 components, CF(1) - the catalytic core - and CF(0) - the membrane proton channel. CF(1) has five subunits: alpha(3), beta(3), gamma(1), delta(1), epsilon(1). CF(0) has three main subunits: a(1), b(2) and c(9-12). The alpha and beta chains form an alternating ring which encloses part of the gamma chain. CF(1) is attached to CF(0) by a central stalk formed by the gamma and epsilon chains, while a peripheral stalk is formed by the delta and b chains.

It is found in the cell inner membrane. It carries out the reaction ATP + H2O + 4 H(+)(in) = ADP + phosphate + 5 H(+)(out). In terms of biological role, produces ATP from ADP in the presence of a proton gradient across the membrane. The alpha chain is a regulatory subunit. The sequence is that of ATP synthase subunit alpha from Petrotoga mobilis (strain DSM 10674 / SJ95).